The following is a 270-amino-acid chain: Fluoride-specific ion channel FluC 2 (270 aa).

4 helical membrane passes run 4 to 24 (IIIL…FIML), 35 to 55 (LDIL…TALY), 67 to 87 (IIGT…YGSV), and 96 to 116 (AFLI…VAVL). Na(+) is bound by residues Gly74 and Ser77.

Belongs to the fluoride channel Fluc/FEX (TC 1.A.43) family.

The protein localises to the cell inner membrane. It catalyses the reaction fluoride(in) = fluoride(out). Na(+) is not transported, but it plays an essential structural role and its presence is essential for fluoride channel function. In terms of biological role, fluoride-specific ion channel. Important for reducing fluoride concentration in the cell, thus reducing its toxicity. This chain is Fluoride-specific ion channel FluC 2, found in Brucella melitensis biotype 1 (strain ATCC 23456 / CCUG 17765 / NCTC 10094 / 16M).